A 757-amino-acid chain; its full sequence is Probable tRNA (uracil-O(2)-)-methyltransferase (757 aa).

Disordered stretches follow at residues 55-93 and 108-138; these read EARGPGTSAGSEQKERGPGPGQGSPGGGPGPRSLSGPEQ and QQEEAQREAASVPLRDSGHPGHAEGREGDFP. Residues 72–84 show a composition bias toward gly residues; it reads PGPGQGSPGGGPG. Serine 78 is subject to Phosphoserine. Over residues 123-136 the composition is skewed to basic and acidic residues; that stretch reads DSGHPGHAEGREGD. Serine 533 carries the phosphoserine modification. The segment at 713 to 743 adopts a C3H1-type zinc-finger fold; sequence ACKTRLCWFFMHHPDGCALSTDCCPFAHGPA.

This sequence belongs to the TRM44 family.

It is found in the cytoplasm. The enzyme catalyses uridine(44) in tRNA(Ser) + S-adenosyl-L-methionine = 2'-O-methyluridine(44) in tRNA(Ser) + S-adenosyl-L-homocysteine + H(+). Its function is as follows. Probable adenosyl-L-methionine (AdoMet)-dependent tRNA (uracil-O(2)-)-methyltransferase. The polypeptide is Probable tRNA (uracil-O(2)-)-methyltransferase (TRMT44) (Homo sapiens (Human)).